The following is a 455-amino-acid chain: N-acetyl-S-(2-succino)cysteine lyase (455 aa).

106–107 (TT) is a binding site for fumarate. His-154 serves as the catalytic Proton donor/acceptor. Arg-233 is a fumarate binding site. Catalysis depends on Ser-277, which acts as the Proton donor/acceptor. Fumarate-binding positions include Ser-278 and 283–285 (KRN).

Belongs to the lyase 1 family.

The enzyme catalyses N-acetyl-S-(2-succino)-L-cysteine = N-acetyl-L-cysteine + fumarate. It participates in amino-acid biosynthesis; L-cysteine biosynthesis. In terms of biological role, catalyzes the cleavage of N-acetyl-S-(2-succino)cysteine into fumarate and N-acetylcysteine. Is involved in a S-(2-succino)cysteine (2SC) degradation pathway that allows the bacterium to recover cysteine from 2SC and to detoxify 2SC that may be a toxic metabolite. Can also perform the reverse reaction in vitro, and has minor activity against 2SC and other small molecule thiols. This is N-acetyl-S-(2-succino)cysteine lyase from Enterococcus italicus (strain DSM 15952 / CCUG 50447 / LMG 22039 / TP 1.5).